A 786-amino-acid chain; its full sequence is Neprilysin-3 (786 aa).

The Cytoplasmic portion of the chain corresponds to Met1 to Lys52. The chain crosses the membrane as a helical; Signal-anchor for type II membrane protein span at residues Trp53–Phe73. The Extracellular portion of the chain corresponds to Thr74–Trp786. Positions Pro102 to Trp786 constitute a Peptidase M13 domain. Intrachain disulfides connect Cys103/Cys108, Cys126/Cys771, Cys134/Cys731, Cys190/Cys450, and Cys659/Cys783. 10 N-linked (GlcNAc...) asparagine glycosylation sites follow: Asn216, Asn226, Asn256, Asn279, Asn305, Asn325, Asn356, Asn388, Asn496, and Asn569. His622 is a Zn(2+) binding site. Glu623 is an active-site residue. 2 residues coordinate Zn(2+): His626 and Glu682. Asp686 functions as the Proton donor in the catalytic mechanism. Residue Asn715 is glycosylated (N-linked (GlcNAc...) asparagine).

This sequence belongs to the peptidase M13 family. The cofactor is Zn(2+).

Its subcellular location is the cell membrane. It catalyses the reaction Preferential cleavage of polypeptides between hydrophobic residues, particularly with Phe or Tyr at P1'.. Metalloendoprotease which is required in the dorsal paired medial neurons for the proper formation of long-term (LTM) and middle-term memories (MTM). Also required in the mushroom body neurons where it functions redundantly with neprilysins Nep2 and Nep4 in normal LTM formation. This Drosophila melanogaster (Fruit fly) protein is Neprilysin-3.